We begin with the raw amino-acid sequence, 185 residues long: MKLVVGLGNPGKKYEHTRHNIGFDIIDRCAQKLDLPLDKQKFKAIYGEKRIGSEKVVLLKPLTYMNLSGEAVRPFMDYFNISNDELVVIYDDLDLPVGKIRLRKKGSAGGHNGIKSLIAHLGTEDFNRIRVGIGRPAHGEPVVHYVLDTYRKEELAFMNEAAEKSAKAIEAWLEKPFLEVMNTFN.

Tyr-14 contributes to the tRNA binding site. Catalysis depends on His-19, which acts as the Proton acceptor. TRNA contacts are provided by Tyr-64, Asn-66, and Asn-112.

It belongs to the PTH family. In terms of assembly, monomer.

The protein localises to the cytoplasm. The catalysed reaction is an N-acyl-L-alpha-aminoacyl-tRNA + H2O = an N-acyl-L-amino acid + a tRNA + H(+). In terms of biological role, hydrolyzes ribosome-free peptidyl-tRNAs (with 1 or more amino acids incorporated), which drop off the ribosome during protein synthesis, or as a result of ribosome stalling. Functionally, catalyzes the release of premature peptidyl moieties from peptidyl-tRNA molecules trapped in stalled 50S ribosomal subunits, and thus maintains levels of free tRNAs and 50S ribosomes. The protein is Peptidyl-tRNA hydrolase of Shouchella clausii (strain KSM-K16) (Alkalihalobacillus clausii).